Consider the following 44-residue polypeptide: Cytochrome b559 subunit beta (44 aa).

A helical membrane pass occupies residues 19–35; that stretch reads WLSIHALAVPTIFFLGS. Position 23 (His23) interacts with heme.

The protein belongs to the PsbE/PsbF family. In terms of assembly, heterodimer of an alpha subunit and a beta subunit. PSII is composed of 1 copy each of membrane proteins PsbA, PsbB, PsbC, PsbD, PsbE, PsbF, PsbH, PsbI, PsbJ, PsbK, PsbL, PsbM, PsbT, PsbX, PsbY, PsbZ, Psb30/Ycf12, at least 3 peripheral proteins of the oxygen-evolving complex and a large number of cofactors. It forms dimeric complexes. Requires heme b as cofactor.

It localises to the plastid. The protein localises to the chloroplast thylakoid membrane. Functionally, this b-type cytochrome is tightly associated with the reaction center of photosystem II (PSII). PSII is a light-driven water:plastoquinone oxidoreductase that uses light energy to abstract electrons from H(2)O, generating O(2) and a proton gradient subsequently used for ATP formation. It consists of a core antenna complex that captures photons, and an electron transfer chain that converts photonic excitation into a charge separation. The chain is Cytochrome b559 subunit beta from Tetradesmus obliquus (Green alga).